Reading from the N-terminus, the 217-residue chain is UPF0193 protein EVG1 (217 aa).

Belongs to the UPF0193 (EVG1) family.

The sequence is that of UPF0193 protein EVG1 (C22orf23) from Homo sapiens (Human).